Reading from the N-terminus, the 29-residue chain is Conotoxin Bu17 (29 aa).

3 disulfides stabilise this stretch: Cys-4-Cys-19, Cys-5-Cys-25, and Cys-15-Cys-26. Residue Cys-26 is modified to Cysteine amide.

Belongs to the conotoxin M superfamily. Expressed by the venom duct.

Its subcellular location is the secreted. In Conus bullatus (Bubble cone), this protein is Conotoxin Bu17.